Reading from the N-terminus, the 215-residue chain is Ribose-5-phosphate isomerase A (215 aa).

Residues 26–29, 79–82, and 92–95 each bind substrate; these read TGST, DGAD, and KGGG. Glu101 serves as the catalytic Proton acceptor. Substrate is bound at residue Lys119.

It belongs to the ribose 5-phosphate isomerase family. In terms of assembly, homodimer.

It carries out the reaction aldehydo-D-ribose 5-phosphate = D-ribulose 5-phosphate. The protein operates within carbohydrate degradation; pentose phosphate pathway; D-ribose 5-phosphate from D-ribulose 5-phosphate (non-oxidative stage): step 1/1. Catalyzes the reversible conversion of ribose-5-phosphate to ribulose 5-phosphate. This Xanthomonas oryzae pv. oryzae (strain PXO99A) protein is Ribose-5-phosphate isomerase A.